Consider the following 682-residue polypeptide: Polyadenylate-binding protein 5 (682 aa).

4 RRM domains span residues 59-136 (SSLY…LSNR), 146-223 (GNVF…HFVR), 239-316 (TNVY…RAQK), and 342-419 (SNLY…LAQR). Positions 588–665 (TISKLASDLA…ALDVLRRSAD (78 aa)) constitute a PABC domain. Ser-600 is subject to Phosphoserine.

Belongs to the polyadenylate-binding protein type-1 family. Expressed predominantly in immature flowers but also at lower levels in mature flowers and siliques. Detected in tapetum, pollen, ovules and developing seeds. Also detected in primary inflorescences and immature siliques.

The protein resides in the cytoplasm. The protein localises to the nucleus. Functionally, binds the poly(A) tail of mRNA. Appears to be an important mediator of the multiple roles of the poly(A) tail in mRNA biogenesis, stability and translation. This is Polyadenylate-binding protein 5 (PAB5) from Arabidopsis thaliana (Mouse-ear cress).